Consider the following 157-residue polypeptide: Nucleoside diphosphate kinase (157 aa).

Residues Lys12, Phe60, Arg88, Thr94, and Arg105 each contribute to the ATP site. Catalysis depends on His121, which acts as the Pros-phosphohistidine intermediate.

Belongs to the NDK family. Mg(2+) serves as cofactor.

It is found in the cytoplasm. It catalyses the reaction a 2'-deoxyribonucleoside 5'-diphosphate + ATP = a 2'-deoxyribonucleoside 5'-triphosphate + ADP. The enzyme catalyses a ribonucleoside 5'-diphosphate + ATP = a ribonucleoside 5'-triphosphate + ADP. Major role in the synthesis of nucleoside triphosphates other than ATP. The ATP gamma phosphate is transferred to the NDP beta phosphate via a ping-pong mechanism, using a phosphorylated active-site intermediate. The chain is Nucleoside diphosphate kinase from Pyrococcus horikoshii (strain ATCC 700860 / DSM 12428 / JCM 9974 / NBRC 100139 / OT-3).